Reading from the N-terminus, the 415-residue chain is MKSILDETIELSSDLISINSVNPTFGGIGEKEKSIYIKNKLEEYNKNYSIKNCEITEYNTVDSEGIERPNIVSKYDFGKNDTLTIISHMDIVPEGDLGLWNSDPFKAEIKDGIIYGRGSEDNHKGIVSSFLLLKMIFEEKIDPKYNLNLIFVADEEDGSKYGLSYLVNNFEDEIFSSKDLIIVPDFGMPEGEFIEIAEKNILWLKFKITGKQCHGSVPENGINADLIAFSFGKGLYDKLYGKYDGINPIFNPAFSTFEPTILKNNIENINTIPGYVELNFDCRIIPKYDPKEVLSDIENYIEVFKNEIEKHILHFDISEKENISITYEILKLEKAEETKKDSEVVKKLGSAIKNVLNKESVLCGMGGGTVAAFLREKGYNTAVWGIGDETAHQPNEHIKIENLIKMAEVYLDILK.

H88 is a binding site for Zn(2+). Residue D90 is part of the active site. D121 serves as a coordination point for Zn(2+). E155 acts as the Proton acceptor in catalysis. Residues E156, D185, and H392 each coordinate Zn(2+).

It belongs to the peptidase M20A family. Zn(2+) serves as cofactor. Co(2+) is required as a cofactor.

This is an uncharacterized protein from Methanococcus maripaludis (strain DSM 14266 / JCM 13030 / NBRC 101832 / S2 / LL).